A 71-amino-acid polypeptide reads, in one-letter code: uncharacterized protein (71 aa).

This is an uncharacterized protein from Lepidoptera (butterflies and moths).